Here is a 175-residue protein sequence, read N- to C-terminus: RNA pyrophosphohydrolase (175 aa).

The 144-residue stretch at 6 to 149 folds into the Nudix hydrolase domain; that stretch reads GYRPNVGIIL…KRQVYQQALT (144 aa). The Nudix box signature appears at 38–59; sequence GGIKHGESPEQAMYRELYEEVG.

Belongs to the Nudix hydrolase family. RppH subfamily. Requires a divalent metal cation as cofactor.

Accelerates the degradation of transcripts by removing pyrophosphate from the 5'-end of triphosphorylated RNA, leading to a more labile monophosphorylated state that can stimulate subsequent ribonuclease cleavage. This is RNA pyrophosphohydrolase from Azoarcus sp. (strain BH72).